Here is a 138-residue protein sequence, read N- to C-terminus: MLMPKRTKFRKQQKGQFAGLSKGATFIDFGEFGMQTLERGWVTSRQIEACRVAINRYLKRKGKVWIRVFPDKSVTKKPAETRMGKGKGAPDHWVAVVRPGRILFEVANVSKEDAQDALRRAAAKLGIRTRFVKRVERV.

This sequence belongs to the universal ribosomal protein uL16 family. As to quaternary structure, part of the 50S ribosomal subunit.

In terms of biological role, binds 23S rRNA and is also seen to make contacts with the A and possibly P site tRNAs. This Chlamydia felis (strain Fe/C-56) (Chlamydophila felis) protein is Large ribosomal subunit protein uL16.